Consider the following 217-residue polypeptide: Choline transport system permease protein OpuBB (217 aa).

Residues 19–198 (TYEHITISLI…ILAIVIDYVL (180 aa)) enclose the ABC transmembrane type-1 domain. 6 consecutive transmembrane segments (helical) span residues 23–43 (ITIS…LGVV), 52–74 (GTII…AFFI), 84–101 (AIVA…RNTY), 128–148 (LVEL…STIY), 150–170 (IGWA…YIFI), and 180–200 (IIGG…VLAV).

It belongs to the binding-protein-dependent transport system permease family. CysTW subfamily.

It is found in the cell membrane. Functionally, involved in a high affinity multicomponent binding-protein-dependent transport system for choline; probably responsible for the translocation of the substrate across the membrane. The chain is Choline transport system permease protein OpuBB (opuBB) from Bacillus subtilis (strain 168).